The following is a 66-amino-acid chain: Large ribosomal subunit protein bL33c (66 aa).

It belongs to the bacterial ribosomal protein bL33 family.

The protein resides in the plastid. The sequence is that of Large ribosomal subunit protein bL33c from Cuscuta gronovii (Common dodder).